We begin with the raw amino-acid sequence, 158 residues long: Immunoglobulin J chain (158 aa).

The N-terminal stretch at 1 to 22 (MKNHLFFWGVLAIFVQAVLVTA) is a signal peptide. 3 disulfide bridges follow: C36/C122, C95/C115, and C130/C155. A glycan (N-linked (GlcNAc...) (complex) asparagine) is linked at N72.

As to quaternary structure, part of the secretory IgA (sIgA) complex that consists of two, four or five IgA monomers, and two additional non-Ig polypeptides, namely the JCHAIN and the secretory component (the proteolytic product of PIGR). Part of the secretory IgM (sIgM) complex that consist of five IgM monomers, and two additional non-Ig polypeptides, namely the JCHAIN and the secretory component (the proteolytic product of PIGR). JCHAIN-containing IgM interacts (via CH4 domain) with FCRM (via Ig-like domain). Post-translationally, N-glycosylated. N-glycans attached to Asn-72 varies from truncated, differentially fucosylated to sialylated (NeuGc) complex types: Man3GlcNAc2; GlcNAc2Man3GlcNAc2(Fuc); Gal1GlcNAc1Man3GlcNAc2; GlcNAc2Man3GlcNAc2; GlcNAc1Man3GlcNAc2; GlcNAc1Man2GlcNAc2 and NeuGc1Gal1GlcNAc2Man3GlcNAc2.

It is found in the secreted. In terms of biological role, serves to link two monomer units of either IgM or IgA. In the case of IgM, the J chain-joined dimer is a nucleating unit for the IgM pentamer, and in the case of IgA it induces dimers and/or larger polymers. It also helps to bind these immunoglobulins to secretory component. This Equus asinus (Donkey) protein is Immunoglobulin J chain (JCHAIN).